Consider the following 154-residue polypeptide: Transcription antitermination protein NusB (154 aa).

The protein belongs to the NusB family.

In terms of biological role, involved in transcription antitermination. Required for transcription of ribosomal RNA (rRNA) genes. Binds specifically to the boxA antiterminator sequence of the ribosomal RNA (rrn) operons. The polypeptide is Transcription antitermination protein NusB (Bordetella parapertussis (strain 12822 / ATCC BAA-587 / NCTC 13253)).